The sequence spans 254 residues: Probable phosphatase TTE1963 (254 aa).

Zn(2+)-binding residues include histidine 14, histidine 16, histidine 22, histidine 47, glutamate 80, histidine 108, histidine 139, aspartate 200, and histidine 202.

It belongs to the PHP family. It depends on Zn(2+) as a cofactor.

In Caldanaerobacter subterraneus subsp. tengcongensis (strain DSM 15242 / JCM 11007 / NBRC 100824 / MB4) (Thermoanaerobacter tengcongensis), this protein is Probable phosphatase TTE1963.